Here is a 576-residue protein sequence, read N- to C-terminus: Sulfite reductase [NADPH] hemoprotein beta-component (576 aa).

4 residues coordinate [4Fe-4S] cluster: cysteine 435, cysteine 441, cysteine 480, and cysteine 484. Siroheme is bound at residue cysteine 484.

It belongs to the nitrite and sulfite reductase 4Fe-4S domain family. Alpha(8)-beta(8). The alpha component is a flavoprotein, the beta component is a hemoprotein. The cofactor is siroheme. [4Fe-4S] cluster serves as cofactor.

It carries out the reaction hydrogen sulfide + 3 NADP(+) + 3 H2O = sulfite + 3 NADPH + 4 H(+). Its pathway is sulfur metabolism; hydrogen sulfide biosynthesis; hydrogen sulfide from sulfite (NADPH route): step 1/1. Functionally, component of the sulfite reductase complex that catalyzes the 6-electron reduction of sulfite to sulfide. This is one of several activities required for the biosynthesis of L-cysteine from sulfate. The polypeptide is Sulfite reductase [NADPH] hemoprotein beta-component (Yersinia pestis bv. Antiqua (strain Antiqua)).